We begin with the raw amino-acid sequence, 137 residues long: Large-conductance mechanosensitive channel (137 aa).

Transmembrane regions (helical) follow at residues Phe10–Gly30 and Gly76–Ile96.

The protein belongs to the MscL family. Homopentamer.

Its subcellular location is the cell inner membrane. Functionally, channel that opens in response to stretch forces in the membrane lipid bilayer. May participate in the regulation of osmotic pressure changes within the cell. In Pectobacterium carotovorum subsp. carotovorum (strain PC1), this protein is Large-conductance mechanosensitive channel.